Consider the following 815-residue polypeptide: SNF1 protein kinase subunit beta-1 (815 aa).

Polar residues predominate over residues 1–11 (MGNSPSTQDPS). Disordered regions lie at residues 1–88 (MGNS…TIDK) and 117–146 (SDDHDVGAPEEQVKSPSFLSPGPSMATVKR). Gly2 is lipidated: N-myristoyl glycine. The span at 12-31 (HSTKKEHGHHFHDAFNKDRQ) shows a compositional bias: basic and acidic residues. A compositionally biased stretch (polar residues) spans 32–42 (GSITSQLFNNR). Ser33 carries the post-translational modification Phosphoserine. Composition is skewed to basic and acidic residues over residues 72 to 88 (PSTDCDGRMSSDTTIDK) and 117 to 129 (SDDHDVGAPEEQV). Phosphoserine is present on residues Ser181, Ser198, Ser200, Ser206, Ser209, and Ser220. 2 disordered regions span residues 311–335 (HANNNGNIENNTRNKGNAGGSNDDF) and 362–389 (KHHNKTKKAQNKKIRSVSNSRRSSFASL). Over residues 313 to 326 (NNNGNIENNTRNKG) the composition is skewed to low complexity. Phosphoserine is present on Ser331. The span at 363–376 (HHNKTKKAQNKKIR) shows a compositional bias: basic residues. Residues 377–389 (SVSNSRRSSFASL) show a composition bias toward low complexity. The interval 473-716 (VSTDIASALK…LQQGGNIDAE (244 aa)) is kinase-interacting sequence (KIS); required for interaction with SNF1. Phosphoserine occurs at positions 494 and 497. Residues 581-616 (EPTLDEELPKRPELKRFPSSSRKSSYYSAKGVERPS) are disordered. The segment covering 587–596 (ELPKRPELKR) has biased composition (basic and acidic residues). Low complexity predominate over residues 599–608 (SSSRKSSYYS). Ser643 carries the post-translational modification Phosphoserine. The association with SNF1 kinase complex (ASC) domain; required for interaction with SNF4 stretch occupies residues 724-804 (SRYPVPDLPI…FITQVVYAPC (81 aa)).

It belongs to the 5'-AMP-activated protein kinase beta subunit family. As to quaternary structure, component of the SNF1 kinase complex, a heterotrimeric complex composed of the catalytic alpha subunit SNF1, one of the three related beta subunits SIP1, SIP2 or GAL83, and the regulatory gamma subunit SNF4. The beta subunit serves as a bridge between the catalytic and the regulatory subunit. Interacts (via KIS domain) with SNF1. Interacts (via ASC domain) with SNF4. Post-translationally, phosphorylated by SNF1 in vitro.

The protein resides in the cytoplasm. It localises to the vacuole membrane. Functionally, beta subunit of the SNF1 kinase complex, which is required for transcriptional, metabolic, and developmental adaptations in response to glucose limitation. Has a structural role, mediating heterotrimer formation, and a regulatory role, defining carbon source-regulated subcellular location and substrate specificity of the SNF1 kinase complex. Promotes the PKA-regulated relocalization of the SNF1 kinase complex to the vacuolar membrane in response to various types of carbon stress. The polypeptide is SNF1 protein kinase subunit beta-1 (SIP1) (Saccharomyces cerevisiae (strain ATCC 204508 / S288c) (Baker's yeast)).